The chain runs to 291 residues: POU class 2 homeobox associating-factor 2 (291 aa).

The 23-residue stretch at 7–29 (KRVYQGVRVKHTVKDLLAEKRLR) folds into the OCA domain. The disordered stretch occupies residues 176–219 (AAPVADSPSLAGPDSGSSSPYRLTSGRSGSSIPSSSQPYTLQPL). Residues 200-211 (SGRSGSSIPSSS) are compositionally biased toward low complexity.

Belongs to the POU2AF family.

Transcriptional coactivator that may regulate cell type-specific differentiation pathways. In Danio rerio (Zebrafish), this protein is POU class 2 homeobox associating-factor 2 (pou2af2).